A 395-amino-acid polypeptide reads, in one-letter code: Biotin biosynthesis cytochrome P450 (395 aa).

R60 contacts substrate. Heme is bound at residue 89–93 (HRRLR). Position 169–173 (169–173 (IDFTR)) interacts with substrate. A disulfide bond links C250 and C275. 285-287 (TAR) serves as a coordination point for heme. Position 307 (Y307) interacts with substrate. Heme is bound by residues 343–345 (HVC) and C345.

It depends on heme as a cofactor.

It carries out the reaction a C2-C8-saturated long-chain fatty acyl-[ACP] + 2 reduced [flavodoxin] + 3 O2 = 6-carboxyhexanoyl-[ACP] + a fatty aldehyde + 2 oxidized [flavodoxin] + 3 H2O + 3 H(+). It participates in cofactor biosynthesis; biotin biosynthesis. Its function is as follows. Catalyzes the C-C bond cleavage of fatty acid linked to acyl carrier protein (ACP) to generate pimelic acid for biotin biosynthesis. It has high affinity for long-chain fatty acids with the greatest affinity for myristic acid. The chain is Biotin biosynthesis cytochrome P450 (bioI) from Bacillus subtilis (strain 168).